The sequence spans 274 residues: NADPH-dependent 7-cyano-7-deazaguanine reductase (274 aa).

80–82 (VES) contributes to the substrate binding site. 82-83 (SK) contributes to the NADPH binding site. The active-site Thioimide intermediate is Cys-181. The active-site Proton donor is the Asp-188. 220–221 (HE) is a binding site for substrate. NADPH is bound at residue 249 to 250 (RG).

Belongs to the GTP cyclohydrolase I family. QueF type 2 subfamily. As to quaternary structure, homodimer.

The protein localises to the cytoplasm. The catalysed reaction is 7-aminomethyl-7-carbaguanine + 2 NADP(+) = 7-cyano-7-deazaguanine + 2 NADPH + 3 H(+). It functions in the pathway tRNA modification; tRNA-queuosine biosynthesis. Functionally, catalyzes the NADPH-dependent reduction of 7-cyano-7-deazaguanine (preQ0) to 7-aminomethyl-7-deazaguanine (preQ1). The polypeptide is NADPH-dependent 7-cyano-7-deazaguanine reductase (Paraburkholderia phytofirmans (strain DSM 17436 / LMG 22146 / PsJN) (Burkholderia phytofirmans)).